The sequence spans 241 residues: Lysoplasmalogenase TMEM86A (241 aa).

Residues 1–13 (MVSPVTVVKSEGP) lie on the Cytoplasmic side of the membrane. The helical transmembrane segment at 14-30 (KLVPFFKATCVYFVLWL) threads the bilayer. Residues 31–36 (PSSSPS) are Extracellular-facing. The helical transmembrane segment at 37–59 (WVSALIKCLPIFCLWLFLLAHGV) threads the bilayer. At 60 to 67 (RFLLAHPS) the chain is on the cytoplasmic side. The chain crosses the membrane as a helical span at residues 68 to 87 (ASLIFVGLVFSAVGDAFLIW). Residues 88–96 (QDHGYFEHG) are Extracellular-facing. The helical transmembrane segment at 97-113 (LLMFAVAHILYAAAFGM) threads the bilayer. Over 114 to 119 (RPLALR) the chain is Cytoplasmic. The helical transmembrane segment at 120–136 (TGLVIGVLSGLCYALLY) threads the bilayer. Over 137-142 (PGLSGA) the chain is Extracellular. A helical membrane pass occupies residues 143-159 (FTYLVGVYVALISFMGW). Topologically, residues 160 to 176 (RAMAGLRLVGAAWRWTE) are cytoplasmic. Residues 177-195 (LAAGGGALLFILSDLTIAL) traverse the membrane as a helical segment. Residues 196 to 206 (NKFCFPVPYSR) lie on the Extracellular side of the membrane. The helical transmembrane segment at 207–225 (ALIMSTYYAAQMLIALSAV) threads the bilayer. Topologically, residues 226–241 (ESREPVGEDYRLSKAD) are cytoplasmic.

Belongs to the TMEM86 family. In terms of tissue distribution, highly expressed in the jejunum, white adipose tissue, kidney and macrophages.

Its subcellular location is the endoplasmic reticulum membrane. The enzyme catalyses a 1-O-(1Z-alkenyl)-sn-glycero-3-phosphocholine + H2O = a 2,3-saturated aldehyde + sn-glycerol 3-phosphocholine. The catalysed reaction is a 1-O-(1Z-alkenyl)-sn-glycero-3-phosphoethanolamine + H2O = a 2,3-saturated aldehyde + sn-glycero-3-phosphoethanolamine. Its function is as follows. Catalyzes the hydrolysis of the vinyl ether bond of choline or ethanolamine lysoplasmalogens, forming fatty aldehyde and glycerophosphocholine or glycerophosphoethanolamine, respectively and is specific for the sn-2-deacylated (lyso) form of plasmalogen. Plays an important role in lysoplasmalogen metabolism in the adipocyte tissue and macrophages. The protein is Lysoplasmalogenase TMEM86A (Tmem86a) of Mus musculus (Mouse).